A 333-amino-acid polypeptide reads, in one-letter code: Cysteine protease (333 aa).

The signal sequence occupies residues 1–18 (MKFLLVAALCALVAIGSC). The propeptide at 19–108 (KPTREEIKTF…MEAAKEPLIN (90 aa)) is activation peptide. N-linked (GlcNAc...) asparagine glycosylation occurs at Asn93. 2 disulfides stabilise this stretch: Cys134-Cys182 and Cys168-Cys214. The active site involves Cys137. Active-site residues include His281 and Asn301.

Belongs to the peptidase C1 family. In terms of assembly, homodimer.

Its function is as follows. Cysteine protease. The polypeptide is Cysteine protease (Blomia tropicalis (Mite)).